The primary structure comprises 76 residues: Small ribosomal subunit protein uS17 (76 aa).

This sequence belongs to the universal ribosomal protein uS17 family. As to quaternary structure, part of the 30S ribosomal subunit.

Functionally, one of the primary rRNA binding proteins, it binds specifically to the 5'-end of 16S ribosomal RNA. The chain is Small ribosomal subunit protein uS17 from Ruegeria sp. (strain TM1040) (Silicibacter sp.).